We begin with the raw amino-acid sequence, 302 residues long: uncharacterized protein (302 aa).

A run of 7 helical transmembrane segments spans residues 25 to 45 (SFIF…LQIF), 58 to 78 (FSYL…VIAL), 104 to 124 (IQVG…WMFL), 158 to 178 (YGLL…ATVL), 182 to 202 (FAWA…QYVP), 215 to 235 (ALSI…GYLL), and 247 to 267 (MMYI…MFYL). In terms of domain architecture, PQ-loop spans 175-245 (ATVLSSNFAW…SRLPGTNWTT (71 aa)).

Its subcellular location is the membrane. This is an uncharacterized protein from Schizosaccharomyces pombe (strain 972 / ATCC 24843) (Fission yeast).